The following is a 209-amino-acid chain: DNA ADP-ribosyl transferase (209 aa).

One can recognise a DarT domain in the interval 9-209 (TPIYHITHID…RVCIRKDWYY (201 aa)). Residues 13–15 (HIT), glycine 22, and leucine 30 each bind NAD(+). The tract at residues 35-53 (SPPKQRSIAYAHIQERRNR) is NAD(+)-binding element. A DNA-binding region spans residues 44-50 (YAHIQER). Arginine 51 contributes to the NAD(+) binding site. Arginine 51 acts as the Proton acceptor in catalysis. 3 DNA-binding regions span residues 75 to 80 (RSPMLY), 145 to 148 (SYWA), and 154 to 158 (REKKQ). Residues 116-160 (TDRHGVLSHARFFRQLEELAQLDWEAIQASYWADPPELREKKQAE) form an ADP-ribosylating turn-turn loop region. Glutamate 160 is an active-site residue.

It belongs to the DarT ADP-ribosyltransferase family. As to quaternary structure, interacts with cognate antitoxin DarG (via C-terminus); this heterodimeric complex neutralizes the toxic effect of DarT by preventing ssDNA binding to DarT and consequently inactivating the toxin by direct protein-protein interactions.

It carries out the reaction a thymidine in DNA + NAD(+) = an N-(ADP-alpha-D-ribosyl)-thymidine in DNA + nicotinamide + H(+). Its function is as follows. Toxic component of the hybrid type II/IV toxin-antitoxin (TA) system DarTG, which plays a crucial role in controlling bacterial growth and bacteriophage infection. In case of phage infection, DarT toxin ADP-ribosylates DNA, which inhibits both viral DNA and RNA synthesis and leads to abortive infection. ADP-ribosylates ssDNA on the second thymidine of the consensus sequence 5'-TNTC-3'; the protein does not auto-modify. Arg-51 is highly flexible, allowing it to assume multiple positions in the crystal structures. Its toxic effect is neutralized by cognate antitoxin DarG. The sequence is that of DNA ADP-ribosyl transferase from Thermus sp. (strain 2.9).